The primary structure comprises 383 residues: Arginine biosynthesis bifunctional protein ArgJ (383 aa).

Residues Thr146, Lys168, Thr179, Glu259, Asn378, and Ser383 each coordinate substrate. Thr179 (nucleophile) is an active-site residue.

It belongs to the ArgJ family. In terms of assembly, heterotetramer of two alpha and two beta chains.

The protein resides in the cytoplasm. It catalyses the reaction N(2)-acetyl-L-ornithine + L-glutamate = N-acetyl-L-glutamate + L-ornithine. The catalysed reaction is L-glutamate + acetyl-CoA = N-acetyl-L-glutamate + CoA + H(+). Its pathway is amino-acid biosynthesis; L-arginine biosynthesis; L-ornithine and N-acetyl-L-glutamate from L-glutamate and N(2)-acetyl-L-ornithine (cyclic): step 1/1. It functions in the pathway amino-acid biosynthesis; L-arginine biosynthesis; N(2)-acetyl-L-ornithine from L-glutamate: step 1/4. Catalyzes two activities which are involved in the cyclic version of arginine biosynthesis: the synthesis of N-acetylglutamate from glutamate and acetyl-CoA as the acetyl donor, and of ornithine by transacetylation between N(2)-acetylornithine and glutamate. The protein is Arginine biosynthesis bifunctional protein ArgJ of Streptomyces avermitilis (strain ATCC 31267 / DSM 46492 / JCM 5070 / NBRC 14893 / NCIMB 12804 / NRRL 8165 / MA-4680).